We begin with the raw amino-acid sequence, 769 residues long: PDZ domain-containing protein 4 (769 aa).

A PDZ domain is found at 130 to 214 (EVELYKSSHR…TNISLLVARP (85 aa)). The interval 221 to 315 (RWKDSDRDDF…TNTPGSLRKF (95 aa)) is disordered. Residues 229–239 (DFLDDFGSENE) are compositionally biased toward acidic residues. Ser-236 is subject to Phosphoserine. Positions 282 to 298 (RTDESTRNEESSEHDLL) are enriched in basic and acidic residues. The stretch at 389–419 (VNRNESLGHEMAMLEEELRHLEFKCRNILRA) forms a coiled coil. Residues 445–579 (ASEPKKHELS…RHRGQGQEGE (135 aa)) are disordered. Residues 447–467 (EPKKHELSDISELPEKSDKDS) are compositionally biased toward basic and acidic residues. Ser-454 is modified (phosphoserine). Residues 468–479 (TSAYNTGESCRS) show a composition bias toward polar residues. A compositionally biased stretch (basic and acidic residues) spans 530-547 (LSRDPEAGRRQHAEERGR).

In terms of tissue distribution, brain-specific. Expressed in fetal and adult brain. Up-regulated in synovial carcinomas.

The protein localises to the cytoplasm. Its subcellular location is the cell cortex. This chain is PDZ domain-containing protein 4 (PDZD4), found in Homo sapiens (Human).